The chain runs to 822 residues: Calpain-3 (822 aa).

The interval 1–36 is disordered; it reads MPTVISASVAPRTGAEPMSPGPIAQAAQDKGTEAGG. Residues 74–418 form the Calpain catalytic domain; the sequence is LFVDPEFPPD…FTKLEICNLT (345 aa). Catalysis depends on residues Cys129, His335, and Asn359. Positions 419-587 are domain III; the sequence is ADALESDKLQ…KRNLSEEVEN (169 aa). Residues 588–650 form a linker region; sequence TISVDRPVKK…EPGNTDQESE (63 aa). The tract at residues 604-652 is disordered; it reads IFVSDRANSNKELGVDQETEEGKDNTSPDKQAKSPQLEPGNTDQESEEQ. Over residues 623 to 635 the composition is skewed to basic and acidic residues; that stretch reads EEGKDNTSPDKQA. 4 EF-hand domains span residues 650 to 684, 693 to 726, 723 to 758, and 788 to 822; these read EEQRQFRNIFRQIAGDDMEICADELKNVLNRVVNK, FTLESCRSMIALMDTDGSGRLNLQEFHHLWKKIK, KKIKTWQKIFKHYDTDQSGTINSYEMRNAVKDAGFH, and VRLEGMFRAFNAFDKDGDGIIKLNVLEWLQLTMYA. Positions 651-822 are domain IV; the sequence is EQRQFRNIFR…LEWLQLTMYA (172 aa). Residues Ala663, Asp666, Glu668, Glu673, Asp706, Asp708, Ser710, Arg712, Glu717, Asp736, Asp738, Ser740, Thr742, Glu747, Asp801, Asp803, Asp805, and Ile807 each contribute to the Ca(2+) site.

It belongs to the peptidase C2 family. In terms of assembly, homodimer; via EF-hand domain 4. Interacts with TTN/titin. Interacts with CMYA5; this interaction, which results in CMYA5 proteolysis, may protect CAPN3 from autolysis. Interacts with SIMC1. Interacts with UTP25; the interaction is required for CAPN3 translocation to the nucleolus. As to expression, skeletal muscle.

The protein resides in the cytoplasm. It is found in the nucleus. The protein localises to the nucleolus. It carries out the reaction Broad endopeptidase activity.. Activated by micromolar concentrations of calcium and inhibited by calpastatin. Its function is as follows. Calcium-regulated non-lysosomal thiol-protease. Proteolytically cleaves CTBP1. Mediates, with UTP25, the proteasome-independent degradation of p53/TP53. The protein is Calpain-3 (CAPN3) of Bos taurus (Bovine).